The primary structure comprises 316 residues: Pantothenate kinase (316 aa).

Residue G95–S102 participates in ATP binding.

This sequence belongs to the prokaryotic pantothenate kinase family.

It localises to the cytoplasm. It catalyses the reaction (R)-pantothenate + ATP = (R)-4'-phosphopantothenate + ADP + H(+). It functions in the pathway cofactor biosynthesis; coenzyme A biosynthesis; CoA from (R)-pantothenate: step 1/5. The polypeptide is Pantothenate kinase (Shewanella putrefaciens (strain CN-32 / ATCC BAA-453)).